Here is a 753-residue protein sequence, read N- to C-terminus: MTFSFTATVLGSPRIGPNRELKKAVESYWAGRLDAEGLDALARDLRRRTWTSLRDAGLDSVPVNTFSYYDHVLDTAAMLGALPDRVAGIESDLDRYFAAARGNDTVAPLEMTRWFDTNYHYLVPEISPTTTFALDPSKVLRELEEARALDIPARPVVVGPVTFLLLSKAVGSDAPLLDRLDELVPLYADLLGRLAGAGADWVQIDEPALVADRNPKEIAAAKRAYDRLSGLELRPAILVASYFGSLGDALPAIASTGVEGIAIDLVAGSDTLATVPDLTRKHVVAGVVDGRNIWRTDLDAALASLGTLLGSTGSLAVSTSCSLLHVPYTLDAETGIDKALRSWLAFGTEKVREVVTLGTALTSGRESVDDEFALARAAASTRNTDRRLHDATVRARLDALTASDPGRSPAAERREAQSALSLPVLPTTTIGSYPQTTQIRVARAARRKGEIDEAEYLKRMRAEVADVVALQEKLDLDVLVHGEPERNDMVQYFAEQLDGFFATDNGWVQSYGSRCVRPPILYGDVRRSNPMTVEWITYAQSLTQRPVKGMLTGPVTILAWSFVRDDQPLADSANQVALAIRDETVDLQGAGIRIVQVDEPALRELLPLRAADQPGYLDWSVGAFRLATSGVSDSTQIHTHLCYSEFGEVIEAIARLDADVTSIEAARSHMEVLDDLSAVGFDLGVGPGVYDIHSPRVPGVEEIAASLREALKAVPVERLWVNPDCGLKTRGPAEVEASLRNLVDAAKLVRAEL.

5-methyltetrahydropteroyltri-L-glutamate contacts are provided by residues 19 to 22 (RELK) and R113. Residues 430-432 (IGS) and E483 contribute to the L-homocysteine site. L-methionine contacts are provided by residues 430 to 432 (IGS) and E483. 5-methyltetrahydropteroyltri-L-glutamate is bound by residues 514–515 (RC) and W560. D598 is a binding site for L-homocysteine. D598 contributes to the L-methionine binding site. Position 604 (E604) interacts with 5-methyltetrahydropteroyltri-L-glutamate. Zn(2+)-binding residues include H640, C642, and E664. H693 serves as the catalytic Proton donor. C725 provides a ligand contact to Zn(2+).

The protein belongs to the vitamin-B12 independent methionine synthase family. It depends on Zn(2+) as a cofactor.

The catalysed reaction is 5-methyltetrahydropteroyltri-L-glutamate + L-homocysteine = tetrahydropteroyltri-L-glutamate + L-methionine. The protein operates within amino-acid biosynthesis; L-methionine biosynthesis via de novo pathway; L-methionine from L-homocysteine (MetE route): step 1/1. Catalyzes the transfer of a methyl group from 5-methyltetrahydrofolate to homocysteine resulting in methionine formation. The chain is 5-methyltetrahydropteroyltriglutamate--homocysteine methyltransferase from Rhodococcus jostii (strain RHA1).